Here is a 285-residue protein sequence, read N- to C-terminus: TATA box-binding protein-associated factor RNA polymerase I subunit D (285 aa).

Disordered stretches follow at residues 1–49 (MAQS…RIPT) and 85–112 (KKKR…TRNI). Positions 21–39 (GNQSDDSSNSSLFKTQCVP) are enriched in polar residues. The residue at position 24 (Ser-24) is a Phosphoserine. Basic residues predominate over residues 85–104 (KKKRKKRKKRKYKPKLRRQG). Position 134 is a phosphoserine (Ser-134). The tract at residues 193–219 (HKYMDDDGPLSPIEEPSTEDEATDPQS) is disordered. Residue Ser-229 is modified to Phosphoserine. 2 stretches are compositionally biased toward basic and acidic residues: residues 242–264 (NLEQ…KDAT) and 273–285 (KGGE…SEVS). The disordered stretch occupies residues 242-285 (NLEQGKIKKESAFSKKSKAKDATQRGNRRSWKGGEHACLHSEVS).

Component of the transcription factor SL1/TIF-IB complex, composed of TBP and at least TAF1A, TAF1B, TAF1C and TAF1D. Interacts with UBTF.

It localises to the nucleus. Its function is as follows. Component of the transcription factor SL1/TIF-IB complex, which is involved in the assembly of the PIC (preinitiation complex) during RNA polymerase I-dependent transcription. The rate of PIC formation probably is primarily dependent on the rate of association of SL1/TIF-IB with the rDNA promoter. SL1/TIF-IB is involved in stabilization of nucleolar transcription factor 1/UBTF on rDNA. Formation of SL1/TIF-IB excludes the association of TBP with TFIID subunits. This Rattus norvegicus (Rat) protein is TATA box-binding protein-associated factor RNA polymerase I subunit D (Taf1d).